The chain runs to 551 residues: Dihydroxy-acid dehydratase (551 aa).

D78 is a binding site for Mg(2+). Residue C119 coordinates [2Fe-2S] cluster. Residues D120 and K121 each contribute to the Mg(2+) site. The residue at position 121 (K121) is an N6-carboxylysine. [2Fe-2S] cluster is bound at residue C191. E442 contacts Mg(2+). Residue S468 is the Proton acceptor of the active site.

This sequence belongs to the IlvD/Edd family. Homodimer. [2Fe-2S] cluster serves as cofactor. It depends on Mg(2+) as a cofactor.

The catalysed reaction is (2R)-2,3-dihydroxy-3-methylbutanoate = 3-methyl-2-oxobutanoate + H2O. It catalyses the reaction (2R,3R)-2,3-dihydroxy-3-methylpentanoate = (S)-3-methyl-2-oxopentanoate + H2O. It participates in amino-acid biosynthesis; L-isoleucine biosynthesis; L-isoleucine from 2-oxobutanoate: step 3/4. It functions in the pathway amino-acid biosynthesis; L-valine biosynthesis; L-valine from pyruvate: step 3/4. In terms of biological role, functions in the biosynthesis of branched-chain amino acids. Catalyzes the dehydration of (2R,3R)-2,3-dihydroxy-3-methylpentanoate (2,3-dihydroxy-3-methylvalerate) into 2-oxo-3-methylpentanoate (2-oxo-3-methylvalerate) and of (2R)-2,3-dihydroxy-3-methylbutanoate (2,3-dihydroxyisovalerate) into 2-oxo-3-methylbutanoate (2-oxoisovalerate), the penultimate precursor to L-isoleucine and L-valine, respectively. The chain is Dihydroxy-acid dehydratase from Halothermothrix orenii (strain H 168 / OCM 544 / DSM 9562).